A 165-amino-acid chain; its full sequence is Large ribosomal subunit protein uL10 (165 aa).

Belongs to the universal ribosomal protein uL10 family. In terms of assembly, part of the ribosomal stalk of the 50S ribosomal subunit. The N-terminus interacts with L11 and the large rRNA to form the base of the stalk. The C-terminus forms an elongated spine to which L12 dimers bind in a sequential fashion forming a multimeric L10(L12)X complex.

Functionally, forms part of the ribosomal stalk, playing a central role in the interaction of the ribosome with GTP-bound translation factors. The protein is Large ribosomal subunit protein uL10 of Shewanella halifaxensis (strain HAW-EB4).